The sequence spans 243 residues: 1-(5-phosphoribosyl)-5-[(5-phosphoribosylamino)methylideneamino] imidazole-4-carboxamide isomerase (243 aa).

Asp8 acts as the Proton acceptor in catalysis. Asp129 serves as the catalytic Proton donor.

It belongs to the HisA/HisF family.

The protein localises to the cytoplasm. The catalysed reaction is 1-(5-phospho-beta-D-ribosyl)-5-[(5-phospho-beta-D-ribosylamino)methylideneamino]imidazole-4-carboxamide = 5-[(5-phospho-1-deoxy-D-ribulos-1-ylimino)methylamino]-1-(5-phospho-beta-D-ribosyl)imidazole-4-carboxamide. Its pathway is amino-acid biosynthesis; L-histidine biosynthesis; L-histidine from 5-phospho-alpha-D-ribose 1-diphosphate: step 4/9. In Syntrophotalea carbinolica (strain DSM 2380 / NBRC 103641 / GraBd1) (Pelobacter carbinolicus), this protein is 1-(5-phosphoribosyl)-5-[(5-phosphoribosylamino)methylideneamino] imidazole-4-carboxamide isomerase.